The following is a 703-amino-acid chain: Polyribonucleotide nucleotidyltransferase (703 aa).

Mg(2+) is bound by residues Asp-486 and Asp-492. One can recognise a KH domain in the interval 554–613; the sequence is PKIITTNIDPEKIRDVIGPGGKMINKIIAETGVKIDIEEDGRVYILTPDSAAAQKALKII. Residues 623–691 enclose the S1 motif domain; that stretch reads GEVYLGKVVR…KQGRINLSRK (69 aa).

Belongs to the polyribonucleotide nucleotidyltransferase family. It depends on Mg(2+) as a cofactor.

The protein localises to the cytoplasm. The catalysed reaction is RNA(n+1) + phosphate = RNA(n) + a ribonucleoside 5'-diphosphate. In terms of biological role, involved in mRNA degradation. Catalyzes the phosphorolysis of single-stranded polyribonucleotides processively in the 3'- to 5'-direction. In Ruminiclostridium cellulolyticum (strain ATCC 35319 / DSM 5812 / JCM 6584 / H10) (Clostridium cellulolyticum), this protein is Polyribonucleotide nucleotidyltransferase.